The chain runs to 199 residues: uncharacterized protein (199 aa).

This is an uncharacterized protein from Rhodococcus erythropolis (Arthrobacter picolinophilus).